Consider the following 89-residue polypeptide: MDENDGENLLTQPDDTGNSTNGVYAAGAPTKESVEERLVSLLDSYKTITDCCRETGNRLDRLERHLESLRKALLDLNRKIDVQTGYSRY.

The interval 1–29 (MDENDGENLLTQPDDTGNSTNGVYAAGAP) is disordered. Residues 9–22 (LLTQPDDTGNSTNG) show a composition bias toward polar residues. A glycan (N-linked (GlcNAc...) asparagine; by host) is linked at Asn18.

It belongs to the poxviruses fusion protein family. In terms of assembly, homotrimer, covalently linked.

Its subcellular location is the virion membrane. The protein is 10 kDa fusion protein of Capra hircus (Goat).